The following is a 494-amino-acid chain: Alpha-amylase-related protein (494 aa).

The first 20 residues, 1–20 (MIKFALALTLCLAGASLSLA), serve as a signal peptide directing secretion. Q21 carries the post-translational modification Pyrrolidone carboxylic acid. A disulfide bridge connects residues C48 and C104. Residues N118, Q169, and D178 each coordinate Ca(2+). C157 and C171 are oxidised to a cystine. Chloride is bound at residue R206. The active-site Nucleophile is D208. H212 contributes to the Ca(2+) binding site. E245 serves as the catalytic Proton donor. Chloride-binding residues include N308 and R343. 3 disulfides stabilise this stretch: C376-C382, C418-C441, and C448-C460.

It belongs to the glycosyl hydrolase 13 family. As to quaternary structure, monomer. Ca(2+) serves as cofactor. Requires chloride as cofactor.

The protein resides in the secreted. It carries out the reaction Endohydrolysis of (1-&gt;4)-alpha-D-glucosidic linkages in polysaccharides containing three or more (1-&gt;4)-alpha-linked D-glucose units.. The sequence is that of Alpha-amylase-related protein (Amyrel) from Drosophila kikkawai (Fruit fly).